A 139-amino-acid polypeptide reads, in one-letter code: Hydrogenase maturation factor HypA (139 aa).

Residue histidine 2 participates in Ni(2+) binding. Zn(2+) contacts are provided by cysteine 73, cysteine 76, cysteine 110, and cysteine 113.

Belongs to the HypA/HybF family.

Its function is as follows. Involved in the maturation of [NiFe] hydrogenases. Required for nickel insertion into the metal center of the hydrogenase. The sequence is that of Hydrogenase maturation factor HypA from Pyrococcus abyssi (strain GE5 / Orsay).